The chain runs to 165 residues: MNSLENLILVGVIKSCHGIKGHVMLKSFTDPATKILERNLVNESGANIHIKLISQNAKGELICTFNDIATRNEAENLKGYKIFCLRASLPELEEDEFYIADLTHLPVLNQDHKEIGKIKNILNFGAGDIIEIEFSNQTTELLPFNKEFFPIITKDYVILNYQREA.

A PRC barrel domain is found at 94 to 165 (EDEFYIADLT…YVILNYQREA (72 aa)).

This sequence belongs to the RimM family. Binds ribosomal protein uS19.

Its subcellular location is the cytoplasm. In terms of biological role, an accessory protein needed during the final step in the assembly of 30S ribosomal subunit, possibly for assembly of the head region. Essential for efficient processing of 16S rRNA. May be needed both before and after RbfA during the maturation of 16S rRNA. It has affinity for free ribosomal 30S subunits but not for 70S ribosomes. The chain is Ribosome maturation factor RimM from Rickettsia conorii (strain ATCC VR-613 / Malish 7).